A 425-amino-acid chain; its full sequence is 3-phosphoshikimate 1-carboxyvinyltransferase (425 aa).

Positions 22, 23, and 27 each coordinate 3-phosphoshikimate. K22 contributes to the phosphoenolpyruvate binding site. Phosphoenolpyruvate contacts are provided by G95 and R123. 3-phosphoshikimate is bound by residues S169, S170, Q171, S197, D313, N336, and K340. Phosphoenolpyruvate is bound at residue Q171. D313 serves as the catalytic Proton acceptor. Phosphoenolpyruvate contacts are provided by R344, R386, and K411.

Belongs to the EPSP synthase family. As to quaternary structure, monomer.

It is found in the cytoplasm. It carries out the reaction 3-phosphoshikimate + phosphoenolpyruvate = 5-O-(1-carboxyvinyl)-3-phosphoshikimate + phosphate. Its pathway is metabolic intermediate biosynthesis; chorismate biosynthesis; chorismate from D-erythrose 4-phosphate and phosphoenolpyruvate: step 6/7. Functionally, catalyzes the transfer of the enolpyruvyl moiety of phosphoenolpyruvate (PEP) to the 5-hydroxyl of shikimate-3-phosphate (S3P) to produce enolpyruvyl shikimate-3-phosphate and inorganic phosphate. This is 3-phosphoshikimate 1-carboxyvinyltransferase from Marinomonas sp. (strain MWYL1).